An 828-amino-acid chain; its full sequence is Leucine--tRNA ligase (828 aa).

The 'HIGH' region signature appears at 36-46 (PYPSGKIHIGH). Positions 595 to 599 (KMSKS) match the 'KMSKS' region motif. An ATP-binding site is contributed by lysine 598.

Belongs to the class-I aminoacyl-tRNA synthetase family.

The protein resides in the cytoplasm. The enzyme catalyses tRNA(Leu) + L-leucine + ATP = L-leucyl-tRNA(Leu) + AMP + diphosphate. The protein is Leucine--tRNA ligase of Rickettsia typhi (strain ATCC VR-144 / Wilmington).